The following is a 726-amino-acid chain: Catalase-peroxidase (726 aa).

A cross-link (tryptophyl-tyrosyl-methioninium (Trp-Tyr) (with M-242)) is located at residues 93–216; that stretch reads WHSAGTYRVH…LAAVQMGLIY (124 aa). The Proton acceptor role is filled by His94. A cross-link (tryptophyl-tyrosyl-methioninium (Tyr-Met) (with W-93)) is located at residues 216-242; that stretch reads YVNPEGPNGNPDPVAAAVDIRETFTRM. His257 is a heme b binding site. A disordered region spans residues 471–490; it reads GSDKRGGANGARIRLSPQKD.

It belongs to the peroxidase family. Peroxidase/catalase subfamily. As to quaternary structure, homodimer or homotetramer. It depends on heme b as a cofactor. In terms of processing, formation of the three residue Trp-Tyr-Met cross-link is important for the catalase, but not the peroxidase activity of the enzyme.

It carries out the reaction H2O2 + AH2 = A + 2 H2O. The enzyme catalyses 2 H2O2 = O2 + 2 H2O. Functionally, bifunctional enzyme with both catalase and broad-spectrum peroxidase activity. This Methylacidiphilum infernorum (isolate V4) (Methylokorus infernorum (strain V4)) protein is Catalase-peroxidase.